Reading from the N-terminus, the 112-residue chain is Glutaredoxin-C6 (112 aa).

One can recognise a Glutaredoxin domain in the interval 3–103 (LAKAKETVAS…PLLTEAGAIA (101 aa)). An intrachain disulfide couples C23 to C26.

It belongs to the glutaredoxin family. CPYC subfamily. Post-translationally, the N-terminus is blocked. In terms of tissue distribution, expressed in aleurone layer.

The protein resides in the cytoplasm. Functionally, has a glutathione-disulfide oxidoreductase activity in the presence of NADPH and glutathione reductase. Reduces low molecular weight disulfides and proteins. Possesses thioltransferase, dehydroascorbate reductase and GSH-dependent peroxidase activities in vitro. The polypeptide is Glutaredoxin-C6 (GRXC6) (Oryza sativa subsp. japonica (Rice)).